The primary structure comprises 182 residues: Ribosome maturation factor RimM (182 aa).

The PRC barrel domain maps to 102 to 182 (EEGDYYWKDL…TIEVDWDPGF (81 aa)).

It belongs to the RimM family. As to quaternary structure, binds ribosomal protein uS19.

Its subcellular location is the cytoplasm. An accessory protein needed during the final step in the assembly of 30S ribosomal subunit, possibly for assembly of the head region. Essential for efficient processing of 16S rRNA. May be needed both before and after RbfA during the maturation of 16S rRNA. It has affinity for free ribosomal 30S subunits but not for 70S ribosomes. In Salmonella enteritidis PT4 (strain P125109), this protein is Ribosome maturation factor RimM.